The primary structure comprises 329 residues: Beta-ketoacyl-[acyl-carrier-protein] synthase III (329 aa).

Catalysis depends on residues Cys123 and His256. The tract at residues 257 to 261 is ACP-binding; sequence QANIR. Asn286 is an active-site residue.

Belongs to the thiolase-like superfamily. FabH family. Homodimer.

The protein localises to the cytoplasm. It carries out the reaction malonyl-[ACP] + acetyl-CoA + H(+) = 3-oxobutanoyl-[ACP] + CO2 + CoA. It participates in lipid metabolism; fatty acid biosynthesis. Functionally, catalyzes the condensation reaction of fatty acid synthesis by the addition to an acyl acceptor of two carbons from malonyl-ACP. Catalyzes the first condensation reaction which initiates fatty acid synthesis and may therefore play a role in governing the total rate of fatty acid production. Possesses both acetoacetyl-ACP synthase and acetyl transacylase activities. Its substrate specificity determines the biosynthesis of branched-chain and/or straight-chain of fatty acids. This chain is Beta-ketoacyl-[acyl-carrier-protein] synthase III, found in Paraburkholderia phymatum (strain DSM 17167 / CIP 108236 / LMG 21445 / STM815) (Burkholderia phymatum).